Consider the following 2300-residue polypeptide: Adenylate cyclase (2300 aa).

2 stretches are compositionally biased toward polar residues: residues 1–21 (MTRNDGGSRYSSIDSAQSSIT) and 28–41 (TPTSSLGSSMTRPL). Disordered regions lie at residues 1–256 (MTRN…GSFL), 272–593 (GIRP…DLTR), and 631–652 (TKLFTSKKSSSAKQPQDDMDED). Composition is skewed to low complexity over residues 42–61 (SPSLQAGSSSSNGGHNVSRS) and 92–152 (SSQS…QVSP). The span at 153–169 (TGGSRLTQSPTTPSNAS) shows a compositional bias: polar residues. Residues 170–185 (IREHRMSELGGYRREM) are compositionally biased toward basic and acidic residues. Low complexity predominate over residues 204–221 (QQQPQQPQQQQQQQQQQQ). Polar residues predominate over residues 228 to 237 (VSGTFSNLSQ). Residues 303 to 313 (SIASITTTASS) are compositionally biased toward low complexity. Over residues 333–344 (GDRDDWPGRDSS) the composition is skewed to basic and acidic residues. Over residues 345 to 357 (EISLPQPSHSGPM) the composition is skewed to polar residues. Over residues 410–421 (PSRPRTPVPAPE) the composition is skewed to pro residues. Residues 455–469 (DSSQNPPKTSSSARS) are compositionally biased toward polar residues. Basic and acidic residues predominate over residues 484-501 (KSNEDPRALKPSLSREDS). Positions 511–550 (NGSSSMMGTRSRAQSPAPSWTGTSRGLKANSISDGTSSPA) are enriched in polar residues. Positions 552–565 (SHKKGILGRFRRHN) are enriched in basic residues. Positions 631-643 (TKLFTSKKSSSAK) are enriched in low complexity. In terms of domain architecture, Ras-associating spans 749–841 (SNYYIRVFRS…IDEIGREDNS (93 aa)). LRR repeat units follow at residues 867 to 890 (NQKLNHVDLSGRNLITIPVPLYRK), 892 to 914 (AEIVSLNLSRNLSLDVPRDFIQA), 915 to 938 (CTALRDIKYNNNEAQALPKSFATA), 939 to 961 (SKLTYLDVSNNRLQDLDHSELSK), 962 to 986 (LTGLLKLNLANNCLRSLPPTLGAYK), 988 to 1008 (LRTLNISSNFLDVFPSFICEL), 1009 to 1031 (ETIVDLDLSFNSINNLPDNLMKL), 1033 to 1055 (NLEKFVITNNRLSGPISESVRDL), 1056 to 1079 (VSLRELDIRYNQISTIDVLSDLPR), 1081 to 1097 (EILSADHNQISKFSGSF), 1098 to 1119 (ERLRSLKLNSNPIVKFEVKAPV), 1120 to 1142 (PTLKILNLSNAQLASIDESIDNL), 1143 to 1165 (MNLERLILDSNYFVSLPNQIGNL), 1166 to 1188 (KKLDHLSMANNHLGELPPEIGCL), 1189 to 1211 (TELRTLDVHGNNMRKLPNEIWWA), and 1213 to 1234 (KLEHLNASSNILTEFPKPASRA). Residues 1228 to 1336 (PKPASRAPQA…VITPSNGPRK (109 aa)) are disordered. Residues 1253–1263 (ANKNGLLSRTP) are compositionally biased toward polar residues. The span at 1313 to 1327 (TSVVSRSTTQSSTGV) shows a compositional bias: low complexity. 6 LRR repeats span residues 1349 to 1369 (SGSLKNLYLADNQLDDDVFEE), 1373 to 1396 (LPELRVLNLSCNDLSDMPQGTIRS), 1398 to 1420 (PQLVELYLSGNELTSLPAEDFLE), 1422 to 1445 (HCLLQTLHINGNKFINLPAEISRA), 1447 to 1469 (KLQVLDCSSNNLKYNVTNVPYDW), and 1474 to 1497 (NRDLRYLNLSGNKRLEIKNNYRQP). One can recognise a PPM-type phosphatase domain in the interval 1552–1828 (PYGMADTLGK…NKLLIMMIGV (277 aa)). Residues 1847–1867 (FSMPQDDPSHVPPSGNKRRKV) form a disordered region. In terms of domain architecture, Guanylate cyclase spans 1892–2029 (SIVFTDIKNS…PMVNKASRIS (138 aa)). The Mg(2+) site is built by D1897 and D1940. The disordered stretch occupies residues 2272-2300 (LDQAETDDATDNNSSGDVDTLDGSDTEQE). Acidic residues predominate over residues 2290 to 2300 (DTLDGSDTEQE).

Belongs to the adenylyl cyclase class-4/guanylyl cyclase family. Mg(2+) is required as a cofactor.

The enzyme catalyses ATP = 3',5'-cyclic AMP + diphosphate. Its function is as follows. Plays essential roles in regulation of cellular metabolism by catalyzing the synthesis of a second messenger, cAMP. The polypeptide is Adenylate cyclase (cr-1) (Neurospora crassa (strain ATCC 24698 / 74-OR23-1A / CBS 708.71 / DSM 1257 / FGSC 987)).